A 149-amino-acid polypeptide reads, in one-letter code: UPF0178 protein Lmo1456 (149 aa).

The protein belongs to the UPF0178 family.

This chain is UPF0178 protein Lmo1456, found in Listeria monocytogenes serovar 1/2a (strain ATCC BAA-679 / EGD-e).